The following is a 99-amino-acid chain: Ubiquitin-related modifier 1 (99 aa).

A 1-thioglycine modification is found at G99. G99 participates in a covalent cross-link: Glycyl lysine isopeptide (Gly-Lys) (interchain with K-? in acceptor proteins).

This sequence belongs to the URM1 family. As to quaternary structure, homodimer; homodimerization may provide an autoprotection to the highly active C-terminal residue before attacking its substrates. Interacts with NCS2 and NCS6. Forms a conjugate with the target protein AHP1. Post-translationally, C-terminal thiocarboxylation occurs in 2 steps, it is first acyl-adenylated (-COAMP) via the hesA/moeB/thiF part of UBA4, then thiocarboxylated (-COSH) via the rhodanese domain of UBA4.

The protein localises to the cytoplasm. The protein resides in the nucleus. It participates in tRNA modification; 5-methoxycarbonylmethyl-2-thiouridine-tRNA biosynthesis. Functionally, acts as a sulfur carrier required for 2-thiolation of mcm(5)S(2)U at tRNA wobble positions of cytosolic tRNA(Lys), tRNA(Glu) and tRNA(Gln). Serves as sulfur donor in tRNA 2-thiolation reaction by being thiocarboxylated (-COSH) at its C-terminus by the MOCS3 homolog UBA4. The sulfur is then transferred to tRNA to form 2-thiolation of mcm(5)S(2)U. Prior mcm(5) tRNA modification by the elongator complex is required for 2-thiolation. Also acts as a ubiquitin-like protein (UBL) that is covalently conjugated via an isopeptide bond to lysine residues of target proteins such as AHP1. The thiocarboxylated form serves as substrate for conjugation and oxidative stress specifically induces the formation of UBL-protein conjugates. The polypeptide is Ubiquitin-related modifier 1 (Saccharomyces cerevisiae (strain RM11-1a) (Baker's yeast)).